Here is a 172-residue protein sequence, read N- to C-terminus: SsrA-binding protein (172 aa).

It belongs to the SmpB family.

It localises to the cytoplasm. Required for rescue of stalled ribosomes mediated by trans-translation. Binds to transfer-messenger RNA (tmRNA), required for stable association of tmRNA with ribosomes. tmRNA and SmpB together mimic tRNA shape, replacing the anticodon stem-loop with SmpB. tmRNA is encoded by the ssrA gene; the 2 termini fold to resemble tRNA(Ala) and it encodes a 'tag peptide', a short internal open reading frame. During trans-translation Ala-aminoacylated tmRNA acts like a tRNA, entering the A-site of stalled ribosomes, displacing the stalled mRNA. The ribosome then switches to translate the ORF on the tmRNA; the nascent peptide is terminated with the 'tag peptide' encoded by the tmRNA and targeted for degradation. The ribosome is freed to recommence translation, which seems to be the essential function of trans-translation. In Dehalococcoides mccartyi (strain ATCC BAA-2100 / JCM 16839 / KCTC 5957 / BAV1), this protein is SsrA-binding protein.